Consider the following 223-residue polypeptide: Large ribosomal subunit protein bL21 (223 aa).

Residues 110–149 (TALKSTTAEPKAADAPKAKAKAAPKAEKAAAPKAEKAPAK) form a disordered region. Positions 133-147 (PKAEKAAAPKAEKAP) are enriched in basic and acidic residues.

It belongs to the bacterial ribosomal protein bL21 family. In terms of assembly, part of the 50S ribosomal subunit. Contacts protein L20.

In terms of biological role, this protein binds to 23S rRNA in the presence of protein L20. The polypeptide is Large ribosomal subunit protein bL21 (Maricaulis maris (strain MCS10) (Caulobacter maris)).